The sequence spans 435 residues: Palmitoyltransferase pfa4 (435 aa).

Residues 1–10 (MLCSSFSVSR) are Cytoplasmic-facing. A helical transmembrane segment spans residues 11–31 (LAIPAVCILIAFLAYTSQIFF). The Lumenal segment spans residues 32 to 48 (LYFEDAPLKEDEVWRIN). The helical transmembrane segment at 49–69 (ILAICIWICYYRACTVDPGHV) threads the bilayer. Residues 70-129 (PKGWMPSDRERLKADRASGRQRWCRRCEAYKPPRAHHCKTCERCVPKMDHHCPWTSNCVS) lie on the Cytoplasmic side of the membrane. Positions 91–141 (RWCRRCEAYKPPRAHHCKTCERCVPKMDHHCPWTSNCVSHFTFPHFARFLF) constitute a DHHC domain. Cys121 (S-palmitoyl cysteine intermediate) is an active-site residue. A helical membrane pass occupies residues 130–150 (HFTFPHFARFLFYAVVGIAYL). Topologically, residues 151–179 (ETRLWQRVSKVWGSRHLPSYLGPSMGQIG) are lumenal. A helical membrane pass occupies residues 180–200 (HLFVLFVTNSLTLFALSLLLL). Over 201 to 435 (RTLWSLGSNT…QRAKRQHLSQ (235 aa)) the chain is Cytoplasmic. A compositionally biased stretch (basic and acidic residues) spans 359–368 (RKPFHVRLEE). The interval 359 to 408 (RKPFHVRLEEYSNGSSDAEADTGSDDDSDHGEEGWKNSEGERLRDFGVDE) is disordered. Residues 376-388 (AEADTGSDDDSDH) show a composition bias toward acidic residues. The span at 389 to 405 (GEEGWKNSEGERLRDFG) shows a compositional bias: basic and acidic residues.

This sequence belongs to the DHHC palmitoyltransferase family. PFA4 subfamily.

The protein resides in the endoplasmic reticulum membrane. It catalyses the reaction L-cysteinyl-[protein] + hexadecanoyl-CoA = S-hexadecanoyl-L-cysteinyl-[protein] + CoA. Its function is as follows. Mediates the reversible addition of palmitate to target proteins, thereby regulating their membrane association and biological function. The chain is Palmitoyltransferase pfa4 from Emericella nidulans (strain FGSC A4 / ATCC 38163 / CBS 112.46 / NRRL 194 / M139) (Aspergillus nidulans).